Here is a 479-residue protein sequence, read N- to C-terminus: MGSPAAPEGALGYVREFTRHSSDVLGNLNELRLRGILTDVTLLVGGQPLRAHKAVLIACSGFFYSIFRGRAGVGVDVLSLPGGPEARGFAPLLDFMYTSRLRLSPATAPAVLAAATYLQMEHVVQACHRFIQASYEPLGISLRPLEAEPPTPPTAPPPGSPRRSEGHPDPPTESRSCSQGPPSPASPDPKACNWKKYKYIVLNSQASQAGSLVGERSSGQPCPQARLPSGDEASSSSSSSSSSSEEGPIPGPQSRLSPTAATVQFKCGAPASTPYLLTSQAQDTSGSPSERARPLPGSEFFSCQNCEAVAGCSSGLDSLVPGDEDKPYKCQLCRSSFRYKGNLASHRTVHTGEKPYHCSICGARFNRPANLKTHSRIHSGEKPYKCETCGSRFVQVAHLRAHVLIHTGEKPYPCPTCGTRFRHLQTLKSHVRIHTGEKPYHCDPCGLHFRHKSQLRLHLRQKHGAATNTKVHYHILGGP.

One can recognise a BTB domain in the interval 38–105 (TDVTLLVGGQ…MYTSRLRLSP (68 aa)). 2 disordered regions span residues 143–190 (RPLE…PDPK) and 210–259 (GSLV…LSPT). The segment covering 147–160 (AEPPTPPTAPPPGS) has biased composition (pro residues). The segment covering 162-172 (RRSEGHPDPPT) has biased composition (basic and acidic residues). Over residues 234–244 (SSSSSSSSSSS) the composition is skewed to low complexity. C2H2-type zinc fingers lie at residues 328–350 (YKCQ…RTVH), 356–378 (YHCS…SRIH), 384–406 (YKCE…VLIH), 412–434 (YPCP…VRIH), and 440–463 (YHCD…RQKH).

Associates with BCL6 through the BTB domain. In terms of tissue distribution, ubiquitously expressed with higher expression found in heart and placenta.

It localises to the nucleus. Acts as a sequence-specific transcriptional repressor in association with BCL6. May function in a narrow stage or be related to some events in the early B-cell development. This chain is B-cell CLL/lymphoma 6 member B protein (BCL6B), found in Homo sapiens (Human).